The following is a 562-amino-acid chain: Protein KASH5 (562 aa).

Topologically, residues 1 to 521 are cytoplasmic; the sequence is MDLPEGPVGG…PQRLRVTRHP (521 aa). Residues 125–153 form a disordered region; sequence ALTSRQLPSGCPEAEEPANLESFGGEDPR. The stretch at 164–349 forms a coiled coil; the sequence is SSLEDLELSN…LEEQLSQTYE (186 aa). A disordered region spans residues 407–481; sequence ETSEETEFPS…DIPENPPERP (75 aa). Residues 431-448 are compositionally biased toward basic and acidic residues; that stretch reads AHPEEGRKEPSMWLTRRE. A helical; Anchor for type IV membrane protein membrane pass occupies residues 522–542; it reads LIPAPVLGLLLLLLLSVLLLG. The tract at residues 541 to 562 is interaction with SUN1; it reads LGPSPPPTWPHLQLCYLQPPPV. Residues 543–562 lie on the Perinuclear space side of the membrane; sequence PSPPPTWPHLQLCYLQPPPV.

Core component the LINC complex which is composed of inner nuclear membrane SUN domain-containing proteins coupled to outer nuclear membrane KASH domain-containing nesprins. SUN and KASH domain-containing proteins seem to bind each other promiscuously; however, differentially expression of LINC complex constituents is giving rise to specific assemblies. At least SUN1/2-containing core LINC complexes are proposed to be hexameric composed of three protomers of each KASH and SUN domain-containing protein. Interacts with SUN1; this interaction mediates its telomere localization by forming a SUN1:KASH5 LINC complex. Component of a probable SUN2:KASH5 LINC complex. Self-associates. Interacts with DYNC1H1, DCTN1, DYNC1I1/2 and PAFAH1B1; suggesting the association with the dynein-dynactin motor complex. In terms of tissue distribution, expressed in testis (at protein level).

The protein localises to the nucleus outer membrane. It localises to the nucleus. It is found in the chromosome. The protein resides in the telomere. Its subcellular location is the nucleus envelope. As a component of the LINC (LInker of Nucleoskeleton and Cytoskeleton) complex, involved in the connection between the nuclear lamina and the cytoskeleton. The nucleocytoplasmic interactions established by the LINC complex play an important role in the transmission of mechanical forces across the nuclear envelope and in nuclear movement and positioning. Required for telomere attachment to nuclear envelope in the prophase of meiosis. Required for rapid telomere prophase movements implicating a SUN1/2:KASH5 LINC complex in which SUN1 and SUN2 seem to act at least partial redundantly. Required for homolog pairing during meiotic prophase in spermatocytes and probably oocytes. Essential for male and female gametogenesis. Recruits cytoplasmic dynein to telomere attachment sites at the nuclear envelope in spermatocytes. In oocytes is involved in meiotic resumption and spindle formation. The sequence is that of Protein KASH5 from Homo sapiens (Human).